The chain runs to 163 residues: Transcription elongation factor GreA (163 aa).

Residues 11–38 (FKQLEKELDRLKKERPGVIQAIKEAREE) are a coiled coil.

This sequence belongs to the GreA/GreB family.

Necessary for efficient RNA polymerase transcription elongation past template-encoded arresting sites. The arresting sites in DNA have the property of trapping a certain fraction of elongating RNA polymerases that pass through, resulting in locked ternary complexes. Cleavage of the nascent transcript by cleavage factors such as GreA or GreB allows the resumption of elongation from the new 3'terminus. GreA releases sequences of 2 to 3 nucleotides. The protein is Transcription elongation factor GreA of Nitratidesulfovibrio vulgaris (strain ATCC 29579 / DSM 644 / CCUG 34227 / NCIMB 8303 / VKM B-1760 / Hildenborough) (Desulfovibrio vulgaris).